A 273-amino-acid polypeptide reads, in one-letter code: Undecaprenyl-diphosphatase (273 aa).

The next 8 helical transmembrane spans lie at leucine 7 to serine 27, alanine 45 to tryptophan 65, leucine 89 to histidine 109, leucine 115 to alanine 135, threonine 152 to phenylalanine 171, tyrosine 189 to leucine 209, alanine 221 to isoleucine 241, and phenylalanine 253 to leucine 273.

This sequence belongs to the UppP family.

It is found in the cell inner membrane. The catalysed reaction is di-trans,octa-cis-undecaprenyl diphosphate + H2O = di-trans,octa-cis-undecaprenyl phosphate + phosphate + H(+). Functionally, catalyzes the dephosphorylation of undecaprenyl diphosphate (UPP). Confers resistance to bacitracin. The protein is Undecaprenyl-diphosphatase of Erwinia tasmaniensis (strain DSM 17950 / CFBP 7177 / CIP 109463 / NCPPB 4357 / Et1/99).